The sequence spans 340 residues: Branched-chain-amino-acid aminotransferase (340 aa).

K187 is modified (N6-(pyridoxal phosphate)lysine).

The protein belongs to the class-IV pyridoxal-phosphate-dependent aminotransferase family. Pyridoxal 5'-phosphate serves as cofactor.

It catalyses the reaction L-leucine + 2-oxoglutarate = 4-methyl-2-oxopentanoate + L-glutamate. The enzyme catalyses L-isoleucine + 2-oxoglutarate = (S)-3-methyl-2-oxopentanoate + L-glutamate. The catalysed reaction is L-valine + 2-oxoglutarate = 3-methyl-2-oxobutanoate + L-glutamate. It participates in amino-acid biosynthesis; L-isoleucine biosynthesis; L-isoleucine from 2-oxobutanoate: step 4/4. The protein operates within amino-acid biosynthesis; L-leucine biosynthesis; L-leucine from 3-methyl-2-oxobutanoate: step 4/4. Its pathway is amino-acid biosynthesis; L-valine biosynthesis; L-valine from pyruvate: step 4/4. In terms of biological role, acts on leucine, isoleucine and valine. The sequence is that of Branched-chain-amino-acid aminotransferase (ilvE) from Helicobacter pylori (strain J99 / ATCC 700824) (Campylobacter pylori J99).